The following is a 614-amino-acid chain: UvrABC system protein C (614 aa).

The region spanning 25-103 (SVPGVYKMFG…IKSLKPKYNI (79 aa)) is the GIY-YIG domain. The UVR domain maps to 214–249 (KEIQCELFEMMCRFSNNQDYESAIVCRDRLHALKSM).

The protein belongs to the UvrC family. In terms of assembly, interacts with UvrB in an incision complex.

The protein localises to the cytoplasm. Its function is as follows. The UvrABC repair system catalyzes the recognition and processing of DNA lesions. UvrC both incises the 5' and 3' sides of the lesion. The N-terminal half is responsible for the 3' incision and the C-terminal half is responsible for the 5' incision. The protein is UvrABC system protein C of Anaplasma phagocytophilum (strain HZ).